A 482-amino-acid polypeptide reads, in one-letter code: Anaerobic nitric oxide reductase flavorubredoxin (482 aa).

Residues leucine 30–isoleucine 210 form a zinc metallo-hydrolase region. 6 residues coordinate Fe cation: histidine 79, glutamate 81, aspartate 83, histidine 147, aspartate 166, and histidine 227. Residues isoleucine 254 to alanine 393 enclose the Flavodoxin-like domain. FMN-binding positions include threonine 260–asparagine 264 and alanine 342–leucine 369. In terms of domain architecture, Rubredoxin-like spans glycine 426–leucine 477. Residues cysteine 431, cysteine 434, cysteine 464, and cysteine 467 each coordinate Fe cation.

It in the N-terminal section; belongs to the zinc metallo-hydrolase group 3 family. In terms of assembly, homotetramer. Fe cation serves as cofactor. FMN is required as a cofactor.

It localises to the cytoplasm. It participates in nitrogen metabolism; nitric oxide reduction. Functionally, anaerobic nitric oxide reductase; uses NADH to detoxify nitric oxide (NO), protecting several 4Fe-4S NO-sensitive enzymes. Has at least 2 reductase partners, only one of which (NorW, flavorubredoxin reductase) has been identified. NO probably binds to the di-iron center; electrons enter from the NorW at rubredoxin and are transferred sequentially to the FMN center and the di-iron center. Also able to function as an aerobic oxygen reductase. The protein is Anaerobic nitric oxide reductase flavorubredoxin of Klebsiella pneumoniae subsp. pneumoniae (strain ATCC 700721 / MGH 78578).